A 215-amino-acid polypeptide reads, in one-letter code: Small ribosomal subunit protein uS2 (215 aa).

The protein belongs to the universal ribosomal protein uS2 family.

The protein is Small ribosomal subunit protein uS2 of Caldivirga maquilingensis (strain ATCC 700844 / DSM 13496 / JCM 10307 / IC-167).